Consider the following 79-residue polypeptide: Cell division protein ZapB (79 aa).

The stretch at 3 to 79 forms a coiled coil; sequence LEVFEKLEAK…QALLGRMEEV (77 aa).

It belongs to the ZapB family. As to quaternary structure, homodimer. The ends of the coiled-coil dimer bind to each other, forming polymers. Interacts with FtsZ.

It localises to the cytoplasm. Functionally, non-essential, abundant cell division factor that is required for proper Z-ring formation. It is recruited early to the divisome by direct interaction with FtsZ, stimulating Z-ring assembly and thereby promoting cell division earlier in the cell cycle. Its recruitment to the Z-ring requires functional FtsA or ZipA. The protein is Cell division protein ZapB of Salmonella typhi.